The primary structure comprises 620 residues: Chaperone protein HscA homolog (620 aa).

The protein belongs to the heat shock protein 70 family.

Functionally, chaperone involved in the maturation of iron-sulfur cluster-containing proteins. Has a low intrinsic ATPase activity which is markedly stimulated by HscB. The polypeptide is Chaperone protein HscA homolog (Paracidovorax citrulli (strain AAC00-1) (Acidovorax citrulli)).